Consider the following 255-residue polypeptide: Pyrroloquinoline-quinone synthase (255 aa).

The protein belongs to the PqqC family.

It catalyses the reaction 6-(2-amino-2-carboxyethyl)-7,8-dioxo-1,2,3,4,7,8-hexahydroquinoline-2,4-dicarboxylate + 3 O2 = pyrroloquinoline quinone + 2 H2O2 + 2 H2O + H(+). The protein operates within cofactor biosynthesis; pyrroloquinoline quinone biosynthesis. Ring cyclization and eight-electron oxidation of 3a-(2-amino-2-carboxyethyl)-4,5-dioxo-4,5,6,7,8,9-hexahydroquinoline-7,9-dicarboxylic-acid to PQQ. This is Pyrroloquinoline-quinone synthase from Cereibacter sphaeroides (strain ATCC 17023 / DSM 158 / JCM 6121 / CCUG 31486 / LMG 2827 / NBRC 12203 / NCIMB 8253 / ATH 2.4.1.) (Rhodobacter sphaeroides).